The chain runs to 490 residues: Capsid protein (490 aa).

Residues 79 to 143 (GETSEEESDS…TQPKTIPGQK (65 aa)) are disordered. Over residues 81–94 (TSEEESDSGEEPEF) the composition is skewed to acidic residues. The segment covering 95–111 (EQVRMDRTGGTEIPKEE) has biased composition (basic and acidic residues). Residues 122–125 (RKRK) carry the Nuclear localization signal motif. The CCHC-type zinc-finger motif lies at 411-428 (CRCWICNIEGHYANECPN). The segment at 464–490 (YKEEEEETSTEEDDGSSTSEDSDSESD) is disordered. Residues 465 to 490 (KEEEEETSTEEDDGSSTSEDSDSESD) show a composition bias toward acidic residues.

The protein belongs to the caulimoviridae capsid protein family. As to quaternary structure, interacts (via nuclear localization signal) with host importin alpha.

It localises to the virion. It is found in the host nucleus. Its function is as follows. Self assembles to form an icosahedral capsid, about 50 nm in diameter, nm, composed of 420 subunits of the viral capsid protein. The capsid encapsulates the genomic dsDNA. Following virus entry into host cell, provides nuclear import of the viral genome. Virus particles do not enter the nucleus, but dock at the nuclear membrane through the interaction with host importins. The sequence is that of Capsid protein from Arabidopsis thaliana (Mouse-ear cress).